The sequence spans 94 residues: (2R)-sulfolactate sulfo-lyase subunit alpha (94 aa).

Positions 16–90 (VVVVEGVEAG…GEHVHVHNVK (75 aa)) constitute an AFP-like domain.

In terms of assembly, (2R)-sulfolactate sulfo-lyase is composed of a SuyA and a SuyB subunit.

It is found in the cytoplasm. It carries out the reaction (2R)-3-sulfolactate = sulfite + pyruvate + H(+). Its function is as follows. Together with SuyB, desulfonates sulfolactate to pyruvate and sulfite. The sequence is that of (2R)-sulfolactate sulfo-lyase subunit alpha (suyA) from Chromohalobacter salexigens (strain ATCC BAA-138 / DSM 3043 / CIP 106854 / NCIMB 13768 / 1H11).